Here is a 203-residue protein sequence, read N- to C-terminus: Urease accessory protein UreG (203 aa).

Position 11–18 (11–18) interacts with GTP; it reads GPVGSGKT.

Belongs to the SIMIBI class G3E GTPase family. UreG subfamily. In terms of assembly, homodimer. UreD, UreF and UreG form a complex that acts as a GTP-hydrolysis-dependent molecular chaperone, activating the urease apoprotein by helping to assemble the nickel containing metallocenter of UreC. The UreE protein probably delivers the nickel.

The protein localises to the cytoplasm. Its function is as follows. Facilitates the functional incorporation of the urease nickel metallocenter. This process requires GTP hydrolysis, probably effectuated by UreG. This chain is Urease accessory protein UreG, found in Prochlorococcus marinus (strain MIT 9215).